A 225-amino-acid chain; its full sequence is Uracil-DNA glycosylase (225 aa).

The Proton acceptor role is filled by aspartate 65.

Belongs to the uracil-DNA glycosylase (UDG) superfamily. UNG family.

The protein localises to the cytoplasm. The catalysed reaction is Hydrolyzes single-stranded DNA or mismatched double-stranded DNA and polynucleotides, releasing free uracil.. In terms of biological role, excises uracil residues from the DNA which can arise as a result of misincorporation of dUMP residues by DNA polymerase or due to deamination of cytosine. The protein is Uracil-DNA glycosylase of Bacillus cereus (strain AH820).